Here is a 308-residue protein sequence, read N- to C-terminus: Cytochrome b (308 aa).

Helical transmembrane passes span 1–21 (FGSL…LLAM), 45–66 (WLIR…YFHI), 81–101 (WNIG…GYVL), and 146–166 (FFAL…VHLT). The heme b site is built by H51 and H65. The heme b site is built by H150 and H164. H169 is an a ubiquinone binding site. Helical transmembrane passes span 194–214 (TKDI…ALFS), 256–276 (LGGV…PLLH), and 288–308 (LSQI…WVGS).

Belongs to the cytochrome b family. In terms of assembly, the cytochrome bc1 complex contains 11 subunits: 3 respiratory subunits (MT-CYB, CYC1 and UQCRFS1), 2 core proteins (UQCRC1 and UQCRC2) and 6 low-molecular weight proteins (UQCRH/QCR6, UQCRB/QCR7, UQCRQ/QCR8, UQCR10/QCR9, UQCR11/QCR10 and a cleavage product of UQCRFS1). This cytochrome bc1 complex then forms a dimer. Heme b is required as a cofactor.

Its subcellular location is the mitochondrion inner membrane. Its function is as follows. Component of the ubiquinol-cytochrome c reductase complex (complex III or cytochrome b-c1 complex) that is part of the mitochondrial respiratory chain. The b-c1 complex mediates electron transfer from ubiquinol to cytochrome c. Contributes to the generation of a proton gradient across the mitochondrial membrane that is then used for ATP synthesis. The polypeptide is Cytochrome b (MT-CYB) (Baeolophus inornatus (Oak titmouse)).